The following is a 407-amino-acid chain: uncharacterized protein (407 aa).

Disordered stretches follow at residues 1–62 and 350–379; these read MTGR…NGDP and SVTP…KPSS. Residues 17 to 30 show a composition bias toward basic and acidic residues; sequence PVEKMPRFQREHGA.

This is an uncharacterized protein from Ictaluridae (bullhead catfishes).